Here is a 155-residue protein sequence, read N- to C-terminus: Interleukin-36 receptor antagonist protein (155 aa).

Cys8 and Cys154 are oxidised to a cystine.

It belongs to the IL-1 family. As to quaternary structure, interacts with cargo receptor TMED10; the interaction mediates the translocation from the cytoplasm into the ERGIC (endoplasmic reticulum-Golgi intermediate compartment) and thereby secretion. As to expression, predominantly expressed in skin keratinocytes but not in fibroblasts, endothelial cells or melanocytes. Detected also in the spleen, brain leukocyte and macrophage cell types. Increased in lesional psoriasis skin.

The protein resides in the cytoplasm. It is found in the secreted. In terms of biological role, inhibits the activity of interleukin-36 (IL36A,IL36B and IL36G) by binding to receptor IL1RL2 and preventing its association with the coreceptor IL1RAP for signaling. Part of the IL-36 signaling system that is thought to be present in epithelial barriers and to take part in local inflammatory response; similar to the IL-1 system with which it shares the coreceptor. Proposed to play a role in skin inflammation. May be involved in the innate immune response to fungal pathogens, such as Aspergillus fumigatus. May activate an anti-inflammatory signaling pathway by recruiting SIGIRR. The polypeptide is Interleukin-36 receptor antagonist protein (Homo sapiens (Human)).